The chain runs to 257 residues: Putative hydro-lyase Bcenmc03_3969 (257 aa).

Belongs to the D-glutamate cyclase family.

In Burkholderia orbicola (strain MC0-3), this protein is Putative hydro-lyase Bcenmc03_3969.